We begin with the raw amino-acid sequence, 299 residues long: ATP phosphoribosyltransferase (299 aa).

Belongs to the ATP phosphoribosyltransferase family. Long subfamily. It depends on Mg(2+) as a cofactor.

The protein resides in the cytoplasm. The enzyme catalyses 1-(5-phospho-beta-D-ribosyl)-ATP + diphosphate = 5-phospho-alpha-D-ribose 1-diphosphate + ATP. It functions in the pathway amino-acid biosynthesis; L-histidine biosynthesis; L-histidine from 5-phospho-alpha-D-ribose 1-diphosphate: step 1/9. With respect to regulation, feedback inhibited by histidine. In terms of biological role, catalyzes the condensation of ATP and 5-phosphoribose 1-diphosphate to form N'-(5'-phosphoribosyl)-ATP (PR-ATP). Has a crucial role in the pathway because the rate of histidine biosynthesis seems to be controlled primarily by regulation of HisG enzymatic activity. This chain is ATP phosphoribosyltransferase, found in Shewanella loihica (strain ATCC BAA-1088 / PV-4).